The primary structure comprises 809 residues: MRSSYQPVSTTNFEHENAIPTASSSHNLLMSQRFDDSPPSSNDNSIETNITPPPEPPSYEFDIEDPHDDLHKRTHLQRVSIGFQEKILEPLMENIIHPLLQISKFVPDKADYYLSKIGNPFILRRFFYIIFMSFIAYYVLSSGYLFNEKASGSKGMFSQHDILFEYAKKSVDLAKFERDLEYISSMPHGSGTKGDAAIYRYIQESFDNNGLKLVKEMGYSVYSNYPGNVSISYYDNKNEKHDLELSKENFNPLSSNGKLSKVSLIYGGKGTTYDLQHLKDSKTIEDGKDYVLLLQYDKLVSQQVLIAEKFGAKAVIFISEPYGENIDVVQSKPVGLPQYSTGDASGLNWDGSPVEEKDHKFWRQTHIPTIPISTRQGKELLSRLSSGGVTVDDGNSDRSNSGKMGDVLIDVDLQTNVREKHFIPNIVGKIEGREQSDKAIIIAASRNSINFGTTYPNFGTAALLSIVQLFQEVKYKFGWKPLRNIYFISFGGTEFNYAGSSELVEQRLTPLKDEIYSLIDISQLGIPFAEKYENGKTRGELSIETHPLLKKFFNRNAHGNFDISVDNVQHYGDWTPFLANGIPVSVISSDSTRNRDTPTETSEDKFERVEKILEDEQNQQSVKDLLVYLLHISMELIDDPLLHFDIISYVEDIDERLQRLEQAYPEKLNFTSIIKGLLFWKKIGSEWASWTQGWENIVWSHGDGIEPSLLSINRWTWNKKLTNIGRRTCSPAGLPNRSFYKNVLFGPTLIQEDKSKNGGNVDFWTFPGVMDAIYDDDWKRAQEQIDLIGKVLHQSAALFVEETNDIGYK.

Composition is skewed to polar residues over residues Met1 to Asn12 and Pro20 to Met30. The interval Met1–Pro66 is disordered. The Cytoplasmic segment spans residues Met1–Arg125. Positions Ser37–Ile50 are enriched in low complexity. A helical; Signal-anchor for type II membrane protein membrane pass occupies residues Phe126–Phe146. Residues Asn147–Lys809 are Extracellular-facing. Asn228 is a glycosylation site (N-linked (GlcNAc...) asparagine). The PA domain maps to Ser255 to Trp349. 2 N-linked (GlcNAc...) asparagine glycosylation sites follow: Asn669 and Asn736.

Belongs to the peptidase M28 family. M28B subfamily.

Its subcellular location is the membrane. In Saccharomyces cerevisiae (strain ATCC 204508 / S288c) (Baker's yeast), this protein is Putative zinc metalloprotease TRE2 (TRE2).